A 516-amino-acid polypeptide reads, in one-letter code: UDP-N-acetylmuramyl-tripeptide synthetase (516 aa).

S38 serves as a coordination point for UDP-N-acetyl-alpha-D-muramoyl-L-alanyl-D-glutamate. 116-122 (GTKGKTT) contacts ATP. Residues 162 to 163 (TT), S189, and R197 each bind UDP-N-acetyl-alpha-D-muramoyl-L-alanyl-D-glutamate. N6-carboxylysine is present on K231.

Belongs to the MurCDEF family. MurE subfamily. Carboxylation is probably crucial for Mg(2+) binding and, consequently, for the gamma-phosphate positioning of ATP.

It is found in the cytoplasm. It functions in the pathway cell wall biogenesis; peptidoglycan biosynthesis. In terms of biological role, catalyzes the addition of an amino acid to the nucleotide precursor UDP-N-acetylmuramoyl-L-alanyl-D-glutamate (UMAG) in the biosynthesis of bacterial cell-wall peptidoglycan. The chain is UDP-N-acetylmuramyl-tripeptide synthetase from Lactobacillus delbrueckii subsp. bulgaricus (strain ATCC 11842 / DSM 20081 / BCRC 10696 / JCM 1002 / NBRC 13953 / NCIMB 11778 / NCTC 12712 / WDCM 00102 / Lb 14).